The chain runs to 302 residues: Phosphatidylglycerol--prolipoprotein diacylglyceryl transferase (302 aa).

The next 3 membrane-spanning stretches (helical) occupy residues 26–46 (WYAL…VMLV), 67–87 (LVLW…VLFY), and 108–128 (IWEG…AIVL). R156 provides a ligand contact to a 1,2-diacyl-sn-glycero-3-phospho-(1'-sn-glycerol). The next 2 membrane-spanning stretches (helical) occupy residues 231-251 (GALV…LEGV) and 263-283 (LGLT…VWLL).

This sequence belongs to the Lgt family.

It localises to the cell inner membrane. It catalyses the reaction L-cysteinyl-[prolipoprotein] + a 1,2-diacyl-sn-glycero-3-phospho-(1'-sn-glycerol) = an S-1,2-diacyl-sn-glyceryl-L-cysteinyl-[prolipoprotein] + sn-glycerol 1-phosphate + H(+). The protein operates within protein modification; lipoprotein biosynthesis (diacylglyceryl transfer). Functionally, catalyzes the transfer of the diacylglyceryl group from phosphatidylglycerol to the sulfhydryl group of the N-terminal cysteine of a prolipoprotein, the first step in the formation of mature lipoproteins. The polypeptide is Phosphatidylglycerol--prolipoprotein diacylglyceryl transferase (Caulobacter sp. (strain K31)).